A 119-amino-acid polypeptide reads, in one-letter code: Acidic phospholipase A2 DE-II (119 aa).

Cystine bridges form between C11–C72, C26–C118, C28–C44, C43–C99, C50–C92, C60–C85, and C79–C90. Residues Y27, G29, and G31 each coordinate Ca(2+). H47 is an active-site residue. Position 48 (D48) interacts with Ca(2+). D93 is an active-site residue.

The protein belongs to the phospholipase A2 family. Group I subfamily. D49 sub-subfamily. Requires Ca(2+) as cofactor. In terms of tissue distribution, expressed by the venom gland.

The protein resides in the secreted. It carries out the reaction a 1,2-diacyl-sn-glycero-3-phosphocholine + H2O = a 1-acyl-sn-glycero-3-phosphocholine + a fatty acid + H(+). Functionally, PLA2 catalyzes the calcium-dependent hydrolysis of the 2-acyl groups in 3-sn-phosphoglycerides. The protein is Acidic phospholipase A2 DE-II of Naja melanoleuca (Forest cobra).